A 461-amino-acid polypeptide reads, in one-letter code: Bifunctional protein GlmU (461 aa).

Residues 1 to 232 (MNLQIIILAA…SFEVQGINNR (232 aa)) form a pyrophosphorylase region. Residues 8-11 (LAAG), lysine 22, glutamine 73, and 78-79 (GT) each bind UDP-N-acetyl-alpha-D-glucosamine. Mg(2+) is bound at residue aspartate 102. The UDP-N-acetyl-alpha-D-glucosamine site is built by glycine 142, glutamate 157, and asparagine 230. Residue asparagine 230 participates in Mg(2+) binding. The segment at 233-253 (QQLQQLERIWQQRAANQLMEK) is linker. The segment at 254 to 461 (GATLADANRF…WKRPVKRERD (208 aa)) is N-acetyltransferase. Positions 336 and 354 each coordinate UDP-N-acetyl-alpha-D-glucosamine. Histidine 366 (proton acceptor) is an active-site residue. Residues tyrosine 369 and asparagine 380 each contribute to the UDP-N-acetyl-alpha-D-glucosamine site. Residues alanine 383, 389–390 (NY), serine 408, and alanine 426 each bind acetyl-CoA.

The protein in the N-terminal section; belongs to the N-acetylglucosamine-1-phosphate uridyltransferase family. It in the C-terminal section; belongs to the transferase hexapeptide repeat family. Homotrimer. It depends on Mg(2+) as a cofactor.

Its subcellular location is the cytoplasm. The enzyme catalyses alpha-D-glucosamine 1-phosphate + acetyl-CoA = N-acetyl-alpha-D-glucosamine 1-phosphate + CoA + H(+). It catalyses the reaction N-acetyl-alpha-D-glucosamine 1-phosphate + UTP + H(+) = UDP-N-acetyl-alpha-D-glucosamine + diphosphate. Its pathway is nucleotide-sugar biosynthesis; UDP-N-acetyl-alpha-D-glucosamine biosynthesis; N-acetyl-alpha-D-glucosamine 1-phosphate from alpha-D-glucosamine 6-phosphate (route II): step 2/2. It participates in nucleotide-sugar biosynthesis; UDP-N-acetyl-alpha-D-glucosamine biosynthesis; UDP-N-acetyl-alpha-D-glucosamine from N-acetyl-alpha-D-glucosamine 1-phosphate: step 1/1. It functions in the pathway bacterial outer membrane biogenesis; LPS lipid A biosynthesis. Functionally, catalyzes the last two sequential reactions in the de novo biosynthetic pathway for UDP-N-acetylglucosamine (UDP-GlcNAc). The C-terminal domain catalyzes the transfer of acetyl group from acetyl coenzyme A to glucosamine-1-phosphate (GlcN-1-P) to produce N-acetylglucosamine-1-phosphate (GlcNAc-1-P), which is converted into UDP-GlcNAc by the transfer of uridine 5-monophosphate (from uridine 5-triphosphate), a reaction catalyzed by the N-terminal domain. The sequence is that of Bifunctional protein GlmU from Legionella pneumophila subsp. pneumophila (strain Philadelphia 1 / ATCC 33152 / DSM 7513).